A 365-amino-acid chain; its full sequence is UPF0324 membrane protein Cj0999c (365 aa).

The next 11 membrane-spanning stretches (helical) occupy residues I12 to S34, H44 to F63, L83 to V100, F105 to F127, S134 to E153, G163 to F185, A197 to A219, V234 to A256, S269 to Y288, I303 to Q325, and V338 to F360.

It belongs to the UPF0324 family.

Its subcellular location is the cell membrane. This chain is UPF0324 membrane protein Cj0999c, found in Campylobacter jejuni subsp. jejuni serotype O:2 (strain ATCC 700819 / NCTC 11168).